Consider the following 302-residue polypeptide: Bifunctional protein FolD (302 aa).

NADP(+)-binding positions include 165-167, serine 190, and isoleucine 231; that span reads GRS.

This sequence belongs to the tetrahydrofolate dehydrogenase/cyclohydrolase family. Homodimer.

The catalysed reaction is (6R)-5,10-methylene-5,6,7,8-tetrahydrofolate + NADP(+) = (6R)-5,10-methenyltetrahydrofolate + NADPH. The enzyme catalyses (6R)-5,10-methenyltetrahydrofolate + H2O = (6R)-10-formyltetrahydrofolate + H(+). It participates in one-carbon metabolism; tetrahydrofolate interconversion. In terms of biological role, catalyzes the oxidation of 5,10-methylenetetrahydrofolate to 5,10-methenyltetrahydrofolate and then the hydrolysis of 5,10-methenyltetrahydrofolate to 10-formyltetrahydrofolate. This is Bifunctional protein FolD from Prochlorococcus marinus (strain SARG / CCMP1375 / SS120).